Consider the following 327-residue polypeptide: Protein-L-isoaspartate O-methyltransferase (327 aa).

Disordered regions lie at residues 1 to 38 (MSGE…DAAR) and 62 to 105 (PRAA…KSAT). Residues 14-29 (EDLKREPRKPEGRAAE) are compositionally biased toward basic and acidic residues. A compositionally biased stretch (low complexity) spans 62–77 (PRAAGASGSGVPVAKP). The segment covering 92–105 (APSSGVKNGDKSAT) has biased composition (polar residues). The active site involves S175.

This sequence belongs to the methyltransferase superfamily. L-isoaspartyl/D-aspartyl protein methyltransferase family.

Its subcellular location is the cytoplasm. It carries out the reaction [protein]-L-isoaspartate + S-adenosyl-L-methionine = [protein]-L-isoaspartate alpha-methyl ester + S-adenosyl-L-homocysteine. In terms of biological role, catalyzes the methyl esterification of L-isoaspartyl residues in peptides and proteins that result from spontaneous decomposition of normal L-aspartyl and L-asparaginyl residues. It plays a role in the repair and/or degradation of damaged proteins. The protein is Protein-L-isoaspartate O-methyltransferase of Burkholderia thailandensis (strain ATCC 700388 / DSM 13276 / CCUG 48851 / CIP 106301 / E264).